The chain runs to 358 residues: UPF0421 protein BT9727_2513 (358 aa).

Helical transmembrane passes span 19–39, 74–94, 109–129, and 131–151; these read IAVF…IFAV, FTFF…FTIV, TLTA…AFLI, and LATT…ILPP.

It belongs to the UPF0421 family.

It is found in the cell membrane. The sequence is that of UPF0421 protein BT9727_2513 from Bacillus thuringiensis subsp. konkukian (strain 97-27).